The sequence spans 290 residues: Arginine and glutamate-rich protein 1 (290 aa).

Residues Met1–Pro10 are compositionally biased toward polar residues. 3 disordered regions span residues Met1–Leu137, Glu193–Glu216, and Met249–Leu290. Residues Gly12–His28 show a composition bias toward basic residues. Composition is skewed to basic and acidic residues over residues His29 to Ser44 and Arg53 to His76. 2 positions are modified to phosphoserine: Ser77 and Ser79. The span at Ser88–Gln99 shows a compositional bias: low complexity. Positions Phe111–Lys269 form a coiled coil. Residues Arg124–Leu137 are compositionally biased toward basic and acidic residues. Residues Met249–Lys269 show a composition bias toward basic and acidic residues.

The protein belongs to the ARGLU1 family. In terms of assembly, associates with the U1-snRNP complex; the interaction is enhanced by binding of Arglu1 to a stable intronic sequence RNA (sisRNA) produced from the Arglu1 gene by premature cleavage.

Its subcellular location is the nucleus. The protein resides in the nucleus speckle. Post-transcriptional regulator of gene expression; modulates splicing and premature cleavage at cryptic polyadenylation sites of its own pre-mRNA through binding and regulation of the U1-snRNP complex. This is Arginine and glutamate-rich protein 1 from Drosophila melanogaster (Fruit fly).